The chain runs to 552 residues: Steroid transmembrane transporter SLC22A24 (552 aa).

Transmembrane regions (helical) follow at residues 16-36 (FQIL…THIL), 144-164 (LKSV…LMFG), 175-197 (IYTW…PTFV), 201-220 (IFRF…AFIL), 232-252 (IGIT…GGLA), 255-275 (IRDW…LSLL), 349-369 (IICF…GLIL), 371-391 (LQDL…ITFI), 407-427 (INQS…TFLS), 435-455 (VVLA…FFVH), 474-494 (VFSR…VYSP), and 496-516 (LPWV…FCLP).

It belongs to the major facilitator (TC 2.A.1) superfamily. Organic cation transporter (TC 2.A.1.19) family.

Its subcellular location is the cell membrane. The enzyme catalyses estrone 3-sulfate(out) + glutarate(in) = estrone 3-sulfate(in) + glutarate(out). It carries out the reaction 17beta-estradiol 17-O-(beta-D-glucuronate)(out) + glutarate(in) = 17beta-estradiol 17-O-(beta-D-glucuronate)(in) + glutarate(out). It catalyses the reaction taurocholate(out) + glutarate(in) = taurocholate(in) + glutarate(out). The catalysed reaction is 5alpha-androstane-3alpha,17beta-diol 3-O-(beta-D-glucuronate)(out) + glutarate(in) = 5alpha-androstane-3alpha,17beta-diol 3-O-(beta-D-glucuronate)(in) + glutarate(out). The enzyme catalyses glycocholate(out) + glutarate(in) = glycocholate(in) + glutarate(out). It carries out the reaction dehydroepiandrosterone 3-sulfate(out) + glutarate(in) = dehydroepiandrosterone 3-sulfate(in) + glutarate(out). It catalyses the reaction glutarate(in) + succinate(out) = glutarate(out) + succinate(in). Functionally, renal transmembrane organic anion/dicarboxylate exchanger that participates in the reabsorption of conjugated steroids, as well as bile acids, driven by an outward gradient of dicarboxylates such as glutarate or succinate. Transports androstanediol glucuronide (5alpha-androstane-3alpha,17beta-diol 3-O-(beta-D-glucuronate)), estrone 3-sulfate, and estradiol-17-glucuronide (17beta-estradiol 17-O-(beta-D-glucuronate)), and taurocholate. The sequence is that of Steroid transmembrane transporter SLC22A24 from Oryctolagus cuniculus (Rabbit).